The chain runs to 86 residues: ICP47 protein (86 aa).

Residues 2-35 (SWALKTTDMFLDSSRCTHRTYGDVCAEIHKRERE) are active domain. Residues 33 to 86 (EREDREAARTAVTDPELPLLCPPDVRSDPASRNPTQQTRGCARSNERQDRVLAP) are disordered. The segment covering 62–71 (ASRNPTQQTR) has biased composition (polar residues). Over residues 76–86 (SNERQDRVLAP) the composition is skewed to basic and acidic residues.

It belongs to the herpesviridae US12 family. In terms of assembly, interacts with host TAP1 and TAP2; these interactions inhibit the loading of peptides onto MHC class I molecules.

It localises to the host cytoplasm. The protein localises to the host nucleus. Functionally, plays a role in the inhibition of host immune response. Binds specifically to transporters associated with antigen processing (TAP), thereby blocking peptide-binding and translocation by TAP as well as subsequent loading of peptides onto MHC class I molecules. Empty MHC I molecules are retained in the endoplasmic reticulum and ultimately directed to proteasomal degradation. In consequence, infected cells are masked for immune recognition by cytotoxic T-lymphocytes. This is ICP47 protein (US12) from Human herpesvirus 2 (strain HG52) (HHV-2).